The sequence spans 462 residues: L-seryl-tRNA(Sec) selenium transferase (462 aa).

Lysine 295 carries the post-translational modification N6-(pyridoxal phosphate)lysine.

The protein belongs to the SelA family. Homodecamer; pentamer of dimers. Binds only one seryl-tRNA(Sec) per dimer. Requires pyridoxal 5'-phosphate as cofactor.

Its subcellular location is the cytoplasm. It carries out the reaction L-seryl-tRNA(Sec) + selenophosphate + H(+) = L-selenocysteinyl-tRNA(Sec) + phosphate. Its pathway is aminoacyl-tRNA biosynthesis; selenocysteinyl-tRNA(Sec) biosynthesis; selenocysteinyl-tRNA(Sec) from L-seryl-tRNA(Sec) (bacterial route): step 1/1. In terms of biological role, converts seryl-tRNA(Sec) to selenocysteinyl-tRNA(Sec) required for selenoprotein biosynthesis. The protein is L-seryl-tRNA(Sec) selenium transferase of Klebsiella pneumoniae (strain 342).